A 418-amino-acid polypeptide reads, in one-letter code: MASQNITPSPTASSDSVFAHLVRAPEDPILGVTVAYNKDPSPIKLNLGVGAYRTEEGKPLVLDVVRRVERQLLNDMSRNKEYIPIVGLADFNKLSAKLIFGADSPAIQENRVTTVQGLSGTGSLRVGGEFLAKHYHQRIIYLPTPTWGNHTKVFNLAGLTVKTYRYYAPATRGLDFQGLLEDLGSAPSGSVVLLHACAHNPTGVDPTLEQWEQIRQLIRSKSLLPFFDSAYQGFASGSLDADAQPVRLFVADGGELLVAQSYAKNMGLYGERVGALSIVSKSADVSSRVESQLKLVIRPMYSSPPIHGASIVAAILKDRDLYNDWTIELKAMADRIINMRQQLFDALRARGTPGDWSHIIKQIGMFTFTGLNPEQVSILTKEYHIYLTSDGRISMAGLSSKTVPHLAHAIHAVVTRVA.

Lysine 264 carries the post-translational modification N6-(pyridoxal phosphate)lysine.

This sequence belongs to the class-I pyridoxal-phosphate-dependent aminotransferase family. As to quaternary structure, homodimer. Requires pyridoxal 5'-phosphate as cofactor. In terms of tissue distribution, nodules, roots, stems and leaves, in decreasing order of aspartate aminotransferase 1 concentration. Is the predominant aspartate aminotransferase isoenzyme in roots.

Its subcellular location is the cytoplasm. The enzyme catalyses L-aspartate + 2-oxoglutarate = oxaloacetate + L-glutamate. Important for the metabolism of amino acids and Krebs-cycle related organic acids. In plants, it is involved in nitrogen metabolism and in aspects of carbon and energy metabolism. The protein is Aspartate aminotransferase 1 (AAT-1) of Medicago sativa (Alfalfa).